Here is a 277-residue protein sequence, read N- to C-terminus: Large ribosomal subunit protein uL2 (277 aa).

Residues 222–277 (GVAMNPVDHPHGGGEGRTSGGRHPVSPWGKPTKGKRTRSNKATDKFIMRTRHQRKK) form a disordered region.

This sequence belongs to the universal ribosomal protein uL2 family. As to quaternary structure, part of the 50S ribosomal subunit. Forms a bridge to the 30S subunit in the 70S ribosome.

Its function is as follows. One of the primary rRNA binding proteins. Required for association of the 30S and 50S subunits to form the 70S ribosome, for tRNA binding and peptide bond formation. It has been suggested to have peptidyltransferase activity; this is somewhat controversial. Makes several contacts with the 16S rRNA in the 70S ribosome. This is Large ribosomal subunit protein uL2 from Bartonella henselae (strain ATCC 49882 / DSM 28221 / CCUG 30454 / Houston 1) (Rochalimaea henselae).